A 98-amino-acid chain; its full sequence is Cell cycle protein GpsB (98 aa).

Positions 34–71 (LDLIIKDYEAFQQEIDELRQENARLKRQVEELQKRPAM) form a coiled coil.

It belongs to the GpsB family. As to quaternary structure, forms polymers through the coiled coil domains. Interacts with PBP1, MreC and EzrA.

Its subcellular location is the cytoplasm. Functionally, divisome component that associates with the complex late in its assembly, after the Z-ring is formed, and is dependent on DivIC and PBP2B for its recruitment to the divisome. Together with EzrA, is a key component of the system that regulates PBP1 localization during cell cycle progression. Its main role could be the removal of PBP1 from the cell pole after pole maturation is completed. Also contributes to the recruitment of PBP1 to the division complex. Not essential for septum formation. The chain is Cell cycle protein GpsB from Geobacillus kaustophilus (strain HTA426).